We begin with the raw amino-acid sequence, 409 residues long: 5-aminolevulinate synthase (409 aa).

Substrate-binding residues include Arg21 and Ser136. Pyridoxal 5'-phosphate-binding residues include Ser188, His216, and Thr244. The active site involves Lys247. An N6-(pyridoxal phosphate)lysine modification is found at Lys247. The pyridoxal 5'-phosphate site is built by Thr276 and Thr277. Residue Thr362 participates in substrate binding.

Belongs to the class-II pyridoxal-phosphate-dependent aminotransferase family. Homodimer. Requires pyridoxal 5'-phosphate as cofactor.

The catalysed reaction is succinyl-CoA + glycine + H(+) = 5-aminolevulinate + CO2 + CoA. It participates in porphyrin-containing compound metabolism; protoporphyrin-IX biosynthesis; 5-aminolevulinate from glycine: step 1/1. The polypeptide is 5-aminolevulinate synthase (hemA) (Bradyrhizobium diazoefficiens (strain JCM 10833 / BCRC 13528 / IAM 13628 / NBRC 14792 / USDA 110)).